Here is a 110-residue protein sequence, read N- to C-terminus: Large ribosomal subunit protein P1B (110 aa).

Over residues Pro69–Ala85 the composition is skewed to low complexity. The segment at Pro69–Asp110 is disordered. The segment covering Lys95 to Met104 has biased composition (acidic residues).

The protein belongs to the eukaryotic ribosomal protein P1/P2 family. In terms of assembly, component of the large ribosomal subunit (LSU). Mature yeast ribosomes consist of a small (40S) and a large (60S) subunit. The 40S small subunit contains 1 molecule of ribosomal RNA (18S rRNA) and at least 33 different proteins. The large 60S subunit contains 3 rRNA molecules (25S, 5.8S and 5S rRNA) and at least 46 different proteins. The acidic ribosomal P-proteins form the stalk structure of the 60S subunit. They are organized as a pentameric complex in which uL10/P0 interacts with 2 heterodimers of P1 and P2 proteins.

It localises to the cytoplasm. In terms of biological role, component of the ribosome, a large ribonucleoprotein complex responsible for the synthesis of proteins in the cell. The small ribosomal subunit (SSU) binds messenger RNAs (mRNAs) and translates the encoded message by selecting cognate aminoacyl-transfer RNA (tRNA) molecules. The large subunit (LSU) contains the ribosomal catalytic site termed the peptidyl transferase center (PTC), which catalyzes the formation of peptide bonds, thereby polymerizing the amino acids delivered by tRNAs into a polypeptide chain. The nascent polypeptides leave the ribosome through a tunnel in the LSU and interact with protein factors that function in enzymatic processing, targeting, and the membrane insertion of nascent chains at the exit of the ribosomal tunnel. This chain is Large ribosomal subunit protein P1B (rpp102), found in Schizosaccharomyces pombe (strain 972 / ATCC 24843) (Fission yeast).